Consider the following 138-residue polypeptide: Ribosome-binding factor A (138 aa).

Residues aspartate 119–aspartate 138 are disordered.

Belongs to the RbfA family. In terms of assembly, monomer. Binds 30S ribosomal subunits, but not 50S ribosomal subunits or 70S ribosomes.

Its subcellular location is the cytoplasm. Its function is as follows. One of several proteins that assist in the late maturation steps of the functional core of the 30S ribosomal subunit. Associates with free 30S ribosomal subunits (but not with 30S subunits that are part of 70S ribosomes or polysomes). Required for efficient processing of 16S rRNA. May interact with the 5'-terminal helix region of 16S rRNA. In Alkaliphilus metalliredigens (strain QYMF), this protein is Ribosome-binding factor A.